Consider the following 309-residue polypeptide: MRNIVVGSRRSKLALTQTKWVINELKQLGAPFTFEVKEIVTKGDRVLDVTLSKVGGKGLFVKEIEHELLAGGIDMAVHSMKDMPAVLPEGLVIGAVSRREDARDVLVSKGNRMLSDLPPGSVIGTSSLRRSAQLLAYRPDLTIKWIRGNIDTRLAKLESEEYDAIVLAAAGLARMGWGDDVISDYLPFDVCVPAVGQGALAVECREDDDELRQWLSRLNDEQTERAVRAERAFLQQMEGGCQVPIAGYAEVKEGTVRLTALVASPDGKEMYKEIVTGADPEAVGRQAAAILSEQGAKALIERVKKELGD.

An S-(dipyrrolylmethanemethyl)cysteine modification is found at Cys241.

It belongs to the HMBS family. In terms of assembly, monomer. Dipyrromethane serves as cofactor.

The enzyme catalyses 4 porphobilinogen + H2O = hydroxymethylbilane + 4 NH4(+). The protein operates within porphyrin-containing compound metabolism; protoporphyrin-IX biosynthesis; coproporphyrinogen-III from 5-aminolevulinate: step 2/4. Functionally, tetrapolymerization of the monopyrrole PBG into the hydroxymethylbilane pre-uroporphyrinogen in several discrete steps. The sequence is that of Porphobilinogen deaminase from Geobacillus kaustophilus (strain HTA426).